The chain runs to 885 residues: Eukaryotic translation initiation factor 3 subunit C (885 aa).

Residues 1 to 81 (MSFFAKLQGS…SDSDDERQAV (81 aa)) are disordered. Residues 9–28 (GSDSESSSGSESEESILSGS) show a composition bias toward low complexity. The span at 55-76 (EESESEEESSDEDEEEMSDSDD) shows a compositional bias: acidic residues. Residues 624 to 797 (FHMHLNVELL…GVVIFHRVEQ (174 aa)) form the PCI domain. Residues 822–885 (LDVKLGNQGQ…TTMGRRVTAQ (64 aa)) are disordered. A compositionally biased stretch (gly residues) spans 855-872 (RGTYRGRGGRGGRGGFNQ).

The protein belongs to the eIF-3 subunit C family. In terms of assembly, component of the eukaryotic translation initiation factor 3 (eIF-3) complex.

Its subcellular location is the cytoplasm. Component of the eukaryotic translation initiation factor 3 (eIF-3) complex, which is involved in protein synthesis of a specialized repertoire of mRNAs and, together with other initiation factors, stimulates binding of mRNA and methionyl-tRNAi to the 40S ribosome. The eIF-3 complex specifically targets and initiates translation of a subset of mRNAs involved in cell proliferation. The polypeptide is Eukaryotic translation initiation factor 3 subunit C (Cryptococcus neoformans var. neoformans serotype D (strain B-3501A) (Filobasidiella neoformans)).